A 257-amino-acid polypeptide reads, in one-letter code: Achaete-scute complex protein T3 (257 aa).

The 63-residue stretch at 83 to 145 (PSVARRNARE…RIAVEYIRGL (63 aa)) folds into the bHLH domain. Positions 161 to 221 (YNSADESSND…SEISGGGYIK (61 aa)) are disordered. Low complexity-rich tracts occupy residues 165–184 (DESS…LDSS) and 193–213 (QSAQ…SGSE).

In terms of assembly, efficient DNA binding requires dimerization with another bHLH protein. L(1)SC, SC and AC strongly label the presumptive stomatogastric nervous system, while ASE is more prominent in the presumptive procephalic lobe.

Functionally, AS-C proteins are involved in the determination of the neuronal precursors in the peripheral nervous system and the central nervous system. The polypeptide is Achaete-scute complex protein T3 (l(1)sc) (Drosophila melanogaster (Fruit fly)).